The sequence spans 76 residues: Vasotab-TY3 (76 aa).

An N-terminal signal peptide occupies residues 1-21; that stretch reads MKFALFSVLVLMLIATFVAAD. The region spanning 22 to 76 is the Kazal-like domain; the sequence is DCPRICTSDYTPVCGTPSGGRRSANRTFANQCGLDSHNCLNKGDTYDKLHDGECK. Disulfide bonds link Cys23/Cys60, Cys27/Cys53, and Cys35/Cys75.

As to expression, expressed by the salivary gland.

The protein resides in the secreted. Functionally, vasodilator protein that inhibits vasoconstriction of isolated rat femoral artery induced by phenylephrine. Since platelet aggregation and vasoconstriction are key hemostatic responses, particularly in small wounds, this protein likely participates in the antihemostatic responses during blood feeding. Blocks L-type calcium channels (Cav1/CACNA1) in left ventricular myocytes isolated from rat hearts. The polypeptide is Vasotab-TY3 (Tabanus yao (Horsefly)).